We begin with the raw amino-acid sequence, 390 residues long: S-adenosylmethionine:tRNA ribosyltransferase-isomerase (390 aa).

Residues M1 to E22 form a disordered region.

This sequence belongs to the QueA family. Monomer.

The protein localises to the cytoplasm. It carries out the reaction 7-aminomethyl-7-carbaguanosine(34) in tRNA + S-adenosyl-L-methionine = epoxyqueuosine(34) in tRNA + adenine + L-methionine + 2 H(+). It functions in the pathway tRNA modification; tRNA-queuosine biosynthesis. Transfers and isomerizes the ribose moiety from AdoMet to the 7-aminomethyl group of 7-deazaguanine (preQ1-tRNA) to give epoxyqueuosine (oQ-tRNA). This Psychrobacter sp. (strain PRwf-1) protein is S-adenosylmethionine:tRNA ribosyltransferase-isomerase.